The following is a 353-amino-acid chain: Nicotinate-nucleotide--dimethylbenzimidazole phosphoribosyltransferase (353 aa).

Glutamate 318 acts as the Proton acceptor in catalysis.

It belongs to the CobT family.

It carries out the reaction 5,6-dimethylbenzimidazole + nicotinate beta-D-ribonucleotide = alpha-ribazole 5'-phosphate + nicotinate + H(+). Its pathway is nucleoside biosynthesis; alpha-ribazole biosynthesis; alpha-ribazole from 5,6-dimethylbenzimidazole: step 1/2. Functionally, catalyzes the synthesis of alpha-ribazole-5'-phosphate from nicotinate mononucleotide (NAMN) and 5,6-dimethylbenzimidazole (DMB). The protein is Nicotinate-nucleotide--dimethylbenzimidazole phosphoribosyltransferase of Chloroflexus aggregans (strain MD-66 / DSM 9485).